Consider the following 389-residue polypeptide: 26S proteasome non-ATPase regulatory subunit 6 (389 aa).

The region spanning 193-361 (DFKQAAELFL…EIVETNRPDS (169 aa)) is the PCI domain.

The protein belongs to the proteasome subunit S10 family. In terms of assembly, component of the 19S proteasome regulatory particle complex. The 26S proteasome consists of a 20S core particle (CP) and two 19S regulatory subunits (RP). The regulatory particle is made of a lid composed of 9 subunits including PSMD6, a base containing 6 ATPases and few additional components.

In terms of biological role, component of the 26S proteasome, a multiprotein complex involved in the ATP-dependent degradation of ubiquitinated proteins. This complex plays a key role in the maintenance of protein homeostasis by removing misfolded or damaged proteins, which could impair cellular functions, and by removing proteins whose functions are no longer required. Therefore, the proteasome participates in numerous cellular processes, including cell cycle progression, apoptosis, or DNA damage repair. In Homo sapiens (Human), this protein is 26S proteasome non-ATPase regulatory subunit 6 (PSMD6).